A 249-amino-acid chain; its full sequence is 3-deoxy-D-manno-octulosonic acid kinase (249 aa).

Residue Asp175 is part of the active site.

It belongs to the protein kinase superfamily. KdkA/RfaP family.

Its subcellular location is the cell inner membrane. The enzyme catalyses an alpha-Kdo-(2-&gt;6)-lipid IVA + ATP = a 4-O-phospho-alpha-Kdo-(2-&gt;6)-lipid IVA + ADP + H(+). The protein operates within bacterial outer membrane biogenesis; LPS core biosynthesis. Its function is as follows. Catalyzes the ATP-dependent phosphorylation of the 3-deoxy-D-manno-octulosonic acid (Kdo) residue in Kdo-lipid IV(A) at the 4-OH position. The polypeptide is 3-deoxy-D-manno-octulosonic acid kinase (Xanthomonas euvesicatoria pv. vesicatoria (strain 85-10) (Xanthomonas campestris pv. vesicatoria)).